The primary structure comprises 157 residues: Transcription antitermination protein NusB (157 aa).

It belongs to the NusB family.

Its function is as follows. Involved in transcription antitermination. Required for transcription of ribosomal RNA (rRNA) genes. Binds specifically to the boxA antiterminator sequence of the ribosomal RNA (rrn) operons. The polypeptide is Transcription antitermination protein NusB (Xylella fastidiosa (strain 9a5c)).